The following is a 167-amino-acid chain: Leptin (167 aa).

The signal sequence occupies residues 1–21; it reads MLCGPLCRFLWLWPYLSYVEA. A disulfide bridge connects residues Cys-117 and Cys-167.

Belongs to the leptin family.

It is found in the secreted. In terms of biological role, key player in the regulation of energy balance and body weight control. Once released into the circulation, has central and peripheral effects by binding LEPR, found in many tissues, which results in the activation of several major signaling pathways. In the hypothalamus, acts as an appetite-regulating factor that induces a decrease in food intake and an increase in energy consumption by inducing anorexinogenic factors and suppressing orexigenic neuropeptides, also regulates bone mass and secretion of hypothalamo-pituitary-adrenal hormones. In the periphery, increases basal metabolism, influences reproductive function, regulates pancreatic beta-cell function and insulin secretion, is pro-angiogenic for endothelial cell and affects innate and adaptive immunity. In the arcuate nucleus of the hypothalamus, activates by depolarization POMC neurons inducing FOS and SOCS3 expression to release anorexigenic peptides and inhibits by hyperpolarization NPY neurons inducing SOCS3 with a consequent reduction on release of orexigenic peptides. In addition to its known satiety inducing effect, has a modulatory role in nutrient absorption. In the intestine, reduces glucose absorption by enterocytes by activating PKC and leading to a sequential activation of p38, PI3K and ERK signaling pathways which exerts an inhibitory effect on glucose absorption. Acts as a growth factor on certain tissues, through the activation of different signaling pathways increases expression of genes involved in cell cycle regulation such as CCND1, via JAK2-STAT3 pathway, or VEGFA, via MAPK1/3 and PI3K-AKT1 pathways. May also play an apoptotic role via JAK2-STAT3 pathway and up-regulation of BIRC5 expression. Pro-angiogenic, has mitogenic activity on vascular endothelial cells and plays a role in matrix remodeling by regulating the expression of matrix metalloproteinases (MMPs) and tissue inhibitors of metalloproteinases (TIMPs). In innate immunity, modulates the activity and function of neutrophils by increasing chemotaxis and the secretion of oxygen radicals. Increases phagocytosis by macrophages and enhances secretion of pro-inflammatory mediators. Increases cytotoxic ability of NK cells. Plays a pro-inflammatory role, in synergy with IL1B, by inducing NOS2 which promotes the production of IL6, IL8 and Prostaglandin E2, through a signaling pathway that involves JAK2, PI3K, MAP2K1/MEK1 and MAPK14/p38. In adaptive immunity, promotes the switch of memory T-cells towards T helper-1 cell immune responses. Increases CD4(+)CD25(-) T-cell proliferation and reduces autophagy during TCR (T-cell receptor) stimulation, through MTOR signaling pathway activation and BCL2 up-regulation. This is Leptin (LEP) from Felis catus (Cat).